The sequence spans 738 residues: Pentatricopeptide repeat-containing protein At5g65570 (738 aa).

PPR repeat units follow at residues 98 to 128, 129 to 163, 164 to 198, 200 to 230, 231 to 265, 266 to 300, 301 to 331, 332 to 366, 367 to 401, 402 to 432, 433 to 467, 468 to 502, and 503 to 537; these read AEIS…MSER, HIVT…NVLP, DEYT…GLEV, NVFV…VEEK, DVVL…KVQP, NEYT…GFES, ALAS…IEYP, NQVS…SIKP, NSFT…GFDR, DKYA…LSEV, DVIS…GLQP, NDVT…KIML, and TNDH…DLVL. The segment at 537 to 612 is type E motif; it reads LWRTLLSACK…NPAMSWVEIN (76 aa). The tract at residues 613 to 644 is type E(+) motif; sequence KETHTFMAGDLFSHPNSEQILENLEELIKKSK. The tract at residues 645 to 738 is type DYW motif; the sequence is DLGYVEDKSC…DGSCSCGDYW (94 aa).

It belongs to the PPR family. PCMP-H subfamily.

The protein is Pentatricopeptide repeat-containing protein At5g65570 (PCMP-H47) of Arabidopsis thaliana (Mouse-ear cress).